The following is a 274-amino-acid chain: Formamidopyrimidine-DNA glycosylase (274 aa).

Catalysis depends on P2, which acts as the Schiff-base intermediate with DNA. Residue E3 is the Proton donor of the active site. The active-site Proton donor; for beta-elimination activity is K60. Positions 93 and 112 each coordinate DNA. The segment at 240–274 (DVYGRKGETCRQCGTPITKTVVGGRGTHFCSVCQK) adopts an FPG-type zinc-finger fold. R264 functions as the Proton donor; for delta-elimination activity in the catalytic mechanism.

It belongs to the FPG family. As to quaternary structure, monomer. Zn(2+) is required as a cofactor.

It carries out the reaction Hydrolysis of DNA containing ring-opened 7-methylguanine residues, releasing 2,6-diamino-4-hydroxy-5-(N-methyl)formamidopyrimidine.. The enzyme catalyses 2'-deoxyribonucleotide-(2'-deoxyribose 5'-phosphate)-2'-deoxyribonucleotide-DNA = a 3'-end 2'-deoxyribonucleotide-(2,3-dehydro-2,3-deoxyribose 5'-phosphate)-DNA + a 5'-end 5'-phospho-2'-deoxyribonucleoside-DNA + H(+). Its function is as follows. Involved in base excision repair of DNA damaged by oxidation or by mutagenic agents. Acts as a DNA glycosylase that recognizes and removes damaged bases. Has a preference for oxidized purines, such as 7,8-dihydro-8-oxoguanine (8-oxoG). Has AP (apurinic/apyrimidinic) lyase activity and introduces nicks in the DNA strand. Cleaves the DNA backbone by beta-delta elimination to generate a single-strand break at the site of the removed base with both 3'- and 5'-phosphates. The polypeptide is Formamidopyrimidine-DNA glycosylase (mutM) (Halalkalibacterium halodurans (strain ATCC BAA-125 / DSM 18197 / FERM 7344 / JCM 9153 / C-125) (Bacillus halodurans)).